The sequence spans 433 residues: Glutamate-1-semialdehyde 2,1-aminomutase (433 aa).

An N6-(pyridoxal phosphate)lysine modification is found at Lys-273.

It belongs to the class-III pyridoxal-phosphate-dependent aminotransferase family. HemL subfamily. In terms of assembly, homodimer. Pyridoxal 5'-phosphate is required as a cofactor.

The protein localises to the cytoplasm. The enzyme catalyses (S)-4-amino-5-oxopentanoate = 5-aminolevulinate. The protein operates within porphyrin-containing compound metabolism; protoporphyrin-IX biosynthesis; 5-aminolevulinate from L-glutamyl-tRNA(Glu): step 2/2. Its pathway is porphyrin-containing compound metabolism; chlorophyll biosynthesis. The sequence is that of Glutamate-1-semialdehyde 2,1-aminomutase from Rippkaea orientalis (strain PCC 8801 / RF-1) (Cyanothece sp. (strain PCC 8801)).